We begin with the raw amino-acid sequence, 434 residues long: Maltoporin (434 aa).

An N-terminal signal peptide occupies residues 1-25; it reads MMTTLRKLPLALAIAAGVLTTQAMA.

Belongs to the porin LamB (TC 1.B.3) family. As to quaternary structure, homotrimer formed of three 18-stranded antiparallel beta-barrels, containing three independent channels.

It localises to the cell outer membrane. It catalyses the reaction beta-maltose(in) = beta-maltose(out). Involved in the transport of maltose and maltodextrins. The chain is Maltoporin from Serratia proteamaculans (strain 568).